The following is a 151-amino-acid chain: Deoxyuridine 5'-triphosphate nucleotidohydrolase (151 aa).

Substrate contacts are provided by residues 70-72 (RSG), Asn83, 87-89 (LID), and Met97.

Belongs to the dUTPase family. It depends on Mg(2+) as a cofactor.

It catalyses the reaction dUTP + H2O = dUMP + diphosphate + H(+). It functions in the pathway pyrimidine metabolism; dUMP biosynthesis; dUMP from dCTP (dUTP route): step 2/2. Its function is as follows. This enzyme is involved in nucleotide metabolism: it produces dUMP, the immediate precursor of thymidine nucleotides and it decreases the intracellular concentration of dUTP so that uracil cannot be incorporated into DNA. The polypeptide is Deoxyuridine 5'-triphosphate nucleotidohydrolase (Actinobacillus pleuropneumoniae serotype 5b (strain L20)).